The primary structure comprises 287 residues: Shikimate dehydrogenase (NADP(+)) (287 aa).

Residues 20–22 and T67 contribute to the shikimate site; that span reads SRS. Catalysis depends on K71, which acts as the Proton acceptor. An NADP(+)-binding site is contributed by E84. Shikimate contacts are provided by N93 and D108. Residues 132–136, 156–161, and M226 contribute to the NADP(+) site; these read GAGGA and NRTAAR. A shikimate-binding site is contributed by Y228. G250 contacts NADP(+).

The protein belongs to the shikimate dehydrogenase family. In terms of assembly, homodimer.

The enzyme catalyses shikimate + NADP(+) = 3-dehydroshikimate + NADPH + H(+). The protein operates within metabolic intermediate biosynthesis; chorismate biosynthesis; chorismate from D-erythrose 4-phosphate and phosphoenolpyruvate: step 4/7. Its function is as follows. Involved in the biosynthesis of the chorismate, which leads to the biosynthesis of aromatic amino acids. Catalyzes the reversible NADPH linked reduction of 3-dehydroshikimate (DHSA) to yield shikimate (SA). The protein is Shikimate dehydrogenase (NADP(+)) of Bordetella pertussis (strain Tohama I / ATCC BAA-589 / NCTC 13251).